The sequence spans 54 residues: MAVPKKRTSISKKRIRKNIWKSKGRRAALKAFSLAKSLSTGNSKSFWGDKSNKY.

It belongs to the bacterial ribosomal protein bL32 family.

The protein resides in the plastid. It localises to the chloroplast. In Cucumis sativus (Cucumber), this protein is Large ribosomal subunit protein bL32c.